A 110-amino-acid polypeptide reads, in one-letter code: Flagellar hook-basal body complex protein FliE (110 aa).

Belongs to the FliE family.

The protein localises to the bacterial flagellum basal body. The polypeptide is Flagellar hook-basal body complex protein FliE (Bordetella petrii (strain ATCC BAA-461 / DSM 12804 / CCUG 43448)).